A 471-amino-acid polypeptide reads, in one-letter code: Trigger factor (471 aa).

The PPIase FKBP-type domain occupies 169-264 (GDVAVVDFKG…LKEIKEKELP (96 aa)).

This sequence belongs to the FKBP-type PPIase family. Tig subfamily.

Its subcellular location is the cytoplasm. The enzyme catalyses [protein]-peptidylproline (omega=180) = [protein]-peptidylproline (omega=0). In terms of biological role, involved in protein export. Acts as a chaperone by maintaining the newly synthesized protein in an open conformation. Functions as a peptidyl-prolyl cis-trans isomerase. In Nostoc sp. (strain PCC 7120 / SAG 25.82 / UTEX 2576), this protein is Trigger factor.